A 429-amino-acid chain; its full sequence is 4-hydroxybutyrate coenzyme A transferase (429 aa).

Position 215–219 (215–219) interacts with CoA; it reads GIGAI. Glu238 acts as the 5-glutamyl coenzyme A thioester intermediate in catalysis. A CoA-binding site is contributed by Gly336.

It belongs to the acetyl-CoA hydrolase/transferase family.

This is 4-hydroxybutyrate coenzyme A transferase (cat2) from Clostridium kluyveri (strain ATCC 8527 / DSM 555 / NBRC 12016 / NCIMB 10680 / K1).